Here is a 216-residue protein sequence, read N- to C-terminus: MKMILLGPPGSGKGTQAKMLSERLGIPQISTGDMLRAAVKEGTPMGVKAKAKMDAGALVPDEVVVGIVRERLVKDDCDKGFILDGFPRTLPQADALKQTLGDLKKDLDAVISLEVDNDAVVGRVAGRRTCRDCGKMYHVEFDAPAVADKCDKCGGQLFQRDDDKEETIRKRLDVYAQQTAPLIAYYRADGLLRDIDGMKDISGVQQQILSALGCGL.

10 to 15 (GSGKGT) contacts ATP. Residues 30 to 59 (STGDMLRAAVKEGTPMGVKAKAKMDAGALV) form an NMP region. AMP is bound by residues Thr-31, Arg-36, 57-59 (ALV), 85-88 (GFPR), and Gln-92. Residues 126 to 163 (GRRTCRDCGKMYHVEFDAPAVADKCDKCGGQLFQRDDD) are LID. Position 127 (Arg-127) interacts with ATP. Cys-130, Cys-133, Cys-150, and Cys-153 together coordinate Zn(2+). Residues Arg-160 and Arg-171 each contribute to the AMP site. Position 199 (Lys-199) interacts with ATP.

The protein belongs to the adenylate kinase family. Monomer.

Its subcellular location is the cytoplasm. It catalyses the reaction AMP + ATP = 2 ADP. Its pathway is purine metabolism; AMP biosynthesis via salvage pathway; AMP from ADP: step 1/1. Catalyzes the reversible transfer of the terminal phosphate group between ATP and AMP. Plays an important role in cellular energy homeostasis and in adenine nucleotide metabolism. The chain is Adenylate kinase from Syntrophotalea carbinolica (strain DSM 2380 / NBRC 103641 / GraBd1) (Pelobacter carbinolicus).